The following is a 193-amino-acid chain: Signal peptidase I T (193 aa).

The Cytoplasmic segment spans residues 1-25 (MTEEKNTNTEKTAKKKTNTYLEWGK). The chain crosses the membrane as a helical span at residues 26–42 (AIVIAVLLALLIRHFLF). The Extracellular portion of the chain corresponds to 43 to 193 (EPYLVEGSSM…FPFNEMRQTK (151 aa)). Catalysis depends on residues Ser-51 and Lys-93.

Belongs to the peptidase S26 family.

The protein resides in the cell membrane. The enzyme catalyses Cleavage of hydrophobic, N-terminal signal or leader sequences from secreted and periplasmic proteins.. In Bacillus subtilis (strain 168), this protein is Signal peptidase I T (sipT).